The chain runs to 472 residues: 3-isopropylmalate dehydratase large subunit (472 aa).

[4Fe-4S] cluster-binding residues include Cys-346, Cys-406, and Cys-409.

The protein belongs to the aconitase/IPM isomerase family. LeuC type 1 subfamily. In terms of assembly, heterodimer of LeuC and LeuD. Requires [4Fe-4S] cluster as cofactor.

The enzyme catalyses (2R,3S)-3-isopropylmalate = (2S)-2-isopropylmalate. It participates in amino-acid biosynthesis; L-leucine biosynthesis; L-leucine from 3-methyl-2-oxobutanoate: step 2/4. In terms of biological role, catalyzes the isomerization between 2-isopropylmalate and 3-isopropylmalate, via the formation of 2-isopropylmaleate. This Thermus thermophilus (strain ATCC BAA-163 / DSM 7039 / HB27) protein is 3-isopropylmalate dehydratase large subunit.